The chain runs to 688 residues: Zinc finger and BTB domain-containing protein 48 (688 aa).

Residues 26–89 (CDATLDVGGL…FYTGHLALTS (64 aa)) enclose the BTB domain. The disordered stretch occupies residues 119–140 (SVGQAAGGQSGLGPPASQNVNS). Lysine 143 participates in a covalent cross-link: Glycyl lysine isopeptide (Lys-Gly) (interchain with G-Cter in SUMO2). The tract at residues 161-192 (PRDQEPRGSHSPQRPQLHSPAQSEGPSSLCGK) is disordered. Serine 169, serine 171, and serine 179 each carry phosphoserine. Residues 170–186 (HSPQRPQLHSPAQSEGP) are compositionally biased toward polar residues. Residue lysine 263 forms a Glycyl lysine isopeptide (Lys-Gly) (interchain with G-Cter in SUMO2) linkage. The segment at 291 to 313 (VECPTCHKKFLSKYYLKVHNRKH) adopts a C2H2-type 1 zinc-finger fold. Residues cysteine 293, cysteine 296, histidine 309, histidine 313, cysteine 321, cysteine 324, histidine 337, cysteine 342, cysteine 352, cysteine 355, histidine 368, histidine 372, cysteine 380, cysteine 383, histidine 396, and histidine 401 each coordinate Zn(2+). The CCHC-type zinc-finger motif lies at 319–344 (FECPKCGKCYFRKENLLEHEARNCMN). C2H2-type zinc fingers lie at residues 350 to 372 (FTCS…MVSH), 378 to 401 (YKCS…IKLH), 407 to 430 (HACP…AFKH), 436 to 459 (FVCE…KAKH), 465 to 487 (HVCE…LRTH), 493 to 515 (FQCH…NRTH), 521 to 544 (FSCE…ASRH), 550 to 572 (HFCQ…VRRH), and 578 to 600 (FECT…MEIH). Zn(2+) is bound by residues cysteine 552, cysteine 555, histidine 568, cysteine 580, cysteine 583, histidine 596, and histidine 600.

Belongs to the krueppel C2H2-type zinc-finger protein family. As to quaternary structure, interacts with EP300. Detected in adrenal gland and neuroblastoma.

The protein resides in the nucleus. It localises to the chromosome. The protein localises to the telomere. In terms of biological role, plays a critical role in transcriptional regulation and chromatin remodeling. Acts as a regulator of telomere length. Directly binds the telomeric double-stranded 5'-TTAGGG-3' repeat. Preferentially binds to telomeres that have a low concentration of shelterin complex and acts as a regulator of telomere length by initiating telomere trimming, a process that prevents the accumulation of aberrantly long telomeres. Also acts as a transcription regulator that binds to promoter regions. Regulates expression of a small subset of genes, including MTFP1. Acts as a negative regulator of cell proliferation by specifically activating expression of ARF, a tumor suppressor isoform of CDKN2A. Acts as a transcription regulator of CIITA, the major factor regulating MHC class II gene expression. In addition, regulates cellular m6A/m6Am methylation on RNA by facilitating the recruitment of the RNA demethylase, FTO, to target mRNAs. This chain is Zinc finger and BTB domain-containing protein 48, found in Homo sapiens (Human).